Consider the following 240-residue polypeptide: UDP-2,3-diacylglucosamine hydrolase (240 aa).

The Mn(2+) site is built by Asp-8, His-10, Asp-41, Asn-79, and His-114. A substrate-binding site is contributed by 79-80 (NR). Substrate contacts are provided by Asp-122, Ser-160, Asn-164, Lys-167, and His-195. Mn(2+) is bound by residues His-195 and His-197.

Belongs to the LpxH family. Requires Mn(2+) as cofactor.

The protein resides in the cell inner membrane. The enzyme catalyses UDP-2-N,3-O-bis[(3R)-3-hydroxytetradecanoyl]-alpha-D-glucosamine + H2O = 2-N,3-O-bis[(3R)-3-hydroxytetradecanoyl]-alpha-D-glucosaminyl 1-phosphate + UMP + 2 H(+). Its pathway is glycolipid biosynthesis; lipid IV(A) biosynthesis; lipid IV(A) from (3R)-3-hydroxytetradecanoyl-[acyl-carrier-protein] and UDP-N-acetyl-alpha-D-glucosamine: step 4/6. Functionally, hydrolyzes the pyrophosphate bond of UDP-2,3-diacylglucosamine to yield 2,3-diacylglucosamine 1-phosphate (lipid X) and UMP by catalyzing the attack of water at the alpha-P atom. Involved in the biosynthesis of lipid A, a phosphorylated glycolipid that anchors the lipopolysaccharide to the outer membrane of the cell. This chain is UDP-2,3-diacylglucosamine hydrolase, found in Shigella sonnei (strain Ss046).